The chain runs to 681 residues: Terpene synthase 6, chloroplastic (681 aa).

Mg(2+) contacts are provided by Asp-433, Asp-437, Asn-577, and Glu-585. The DDXXD motif signature appears at 433 to 437 (DDLFD).

It belongs to the terpene synthase family. It depends on Mg(2+) as a cofactor. As to expression, expressed in leaves.

The protein resides in the plastid. Its subcellular location is the chloroplast. The protein operates within secondary metabolite biosynthesis; terpenoid biosynthesis. In terms of biological role, may be involved in the biosynthesis of ent-kaurene diterpenoids natural products such as oridonin, miltiradiene, eriocalyxin B and nezukol, known to exhibit antitumor, anti-inflammatory and antibacterial activities. This Isodon rubescens (Rabdosia rubescens) protein is Terpene synthase 6, chloroplastic.